Consider the following 105-residue polypeptide: ESAT-6-like protein EsxU (105 aa).

The protein belongs to the WXG100 family. CFP-10 subfamily. As to quaternary structure, forms a tight 1:1 complex with EsxT. Complex formation results in induction of alpha-helical conformation and stability against chemical denaturation.

It is found in the secreted. The protein is ESAT-6-like protein EsxU of Mycobacterium tuberculosis (strain ATCC 25618 / H37Rv).